The following is a 173-amino-acid chain: Probable WRKY transcription factor 50 (173 aa).

Positions 107 to 172 (SEVEVLDDGF…YEGSHNHSSM (66 aa)) form a DNA-binding region, WRKY.

It belongs to the WRKY group II-c family.

The protein resides in the nucleus. Its function is as follows. Transcription factor. Interacts specifically with the W box (5'-(T)TGAC[CT]-3'), a frequently occurring elicitor-responsive cis-acting element. The chain is Probable WRKY transcription factor 50 (WRKY50) from Arabidopsis thaliana (Mouse-ear cress).